The following is a 206-amino-acid chain: Charged multivesicular body protein 6 (206 aa).

The N-myristoyl glycine moiety is linked to residue Gly-2. The stretch at 11–103 (TRVTEQDRAV…AQIEMKVIEG (93 aa)) forms a coiled coil. Residues 167 to 206 (EADLELPEVPGEELPEVPEQEPVREKERVKKKPEREMVAV) are disordered. Over residues 168–185 (ADLELPEVPGEELPEVPE) the composition is skewed to acidic residues. The Type-2 MIT-interacting motif motif lies at 170 to 181 (LELPEVPGEELP). The segment covering 187–206 (EPVREKERVKKKPEREMVAV) has biased composition (basic and acidic residues).

This sequence belongs to the SNF7 family. Probable core component of the endosomal sorting required for transport complex III (ESCRT-III). ESCRT-III components are thought to multimerize to form a flat lattice on the perimeter membrane of the endosome.

It localises to the endomembrane system. Its subcellular location is the late endosome membrane. Its function is as follows. Probable core component of the endosomal sorting required for transport complex III (ESCRT-III) which is involved in multivesicular bodies (MVBs) formation and sorting of endosomal cargo proteins into MVBs. MVBs contain intraluminal vesicles (ILVs) that are generated by invagination and scission from the limiting membrane of the endosome and mostly are delivered to lysosomes enabling degradation of membrane proteins, such as stimulated growth factor receptors, lysosomal enzymes and lipids. In the ESCRT-III complex, it probably serves as an acceptor for the ESCRT-II complex on endosomal membranes. This is Charged multivesicular body protein 6 (chmp6) from Danio rerio (Zebrafish).